Here is a 298-residue protein sequence, read N- to C-terminus: Glycine--tRNA ligase alpha subunit (298 aa).

The protein belongs to the class-II aminoacyl-tRNA synthetase family. In terms of assembly, tetramer of two alpha and two beta subunits.

It localises to the cytoplasm. It carries out the reaction tRNA(Gly) + glycine + ATP = glycyl-tRNA(Gly) + AMP + diphosphate. In Gloeothece citriformis (strain PCC 7424) (Cyanothece sp. (strain PCC 7424)), this protein is Glycine--tRNA ligase alpha subunit.